The primary structure comprises 119 residues: Holo-[acyl-carrier-protein] synthase (119 aa).

D8 and E58 together coordinate Mg(2+).

The protein belongs to the P-Pant transferase superfamily. AcpS family. Mg(2+) serves as cofactor.

It is found in the cytoplasm. It catalyses the reaction apo-[ACP] + CoA = holo-[ACP] + adenosine 3',5'-bisphosphate + H(+). In terms of biological role, transfers the 4'-phosphopantetheine moiety from coenzyme A to a Ser of acyl-carrier-protein. In Bacillus cereus (strain ATCC 10987 / NRS 248), this protein is Holo-[acyl-carrier-protein] synthase.